We begin with the raw amino-acid sequence, 104 residues long: L-rhamnose mutarotase (104 aa).

Tyr-18 is a substrate binding site. His-22 acts as the Proton donor in catalysis. Substrate contacts are provided by residues Tyr-41 and Trp-76–Trp-77.

It belongs to the rhamnose mutarotase family. In terms of assembly, homodimer.

Its subcellular location is the cytoplasm. The enzyme catalyses alpha-L-rhamnose = beta-L-rhamnose. It functions in the pathway carbohydrate metabolism; L-rhamnose metabolism. In terms of biological role, involved in the anomeric conversion of L-rhamnose. The polypeptide is L-rhamnose mutarotase (Shigella dysenteriae serotype 1 (strain Sd197)).